Here is a 519-residue protein sequence, read N- to C-terminus: ATP synthase subunit beta (519 aa).

Over residues 1–26 (MAKAATPKRAPARAAAIPAAATPAAK) the composition is skewed to low complexity. A disordered region spans residues 1 to 40 (MAKAATPKRAPARAAAIPAAATPAAKPAKRASTRSAAARS). 197-204 (GGAGVGKT) is an ATP binding site.

It belongs to the ATPase alpha/beta chains family. In terms of assembly, F-type ATPases have 2 components, CF(1) - the catalytic core - and CF(0) - the membrane proton channel. CF(1) has five subunits: alpha(3), beta(3), gamma(1), delta(1), epsilon(1). CF(0) has three main subunits: a(1), b(2) and c(9-12). The alpha and beta chains form an alternating ring which encloses part of the gamma chain. CF(1) is attached to CF(0) by a central stalk formed by the gamma and epsilon chains, while a peripheral stalk is formed by the delta and b chains.

It localises to the cell inner membrane. The enzyme catalyses ATP + H2O + 4 H(+)(in) = ADP + phosphate + 5 H(+)(out). Its function is as follows. Produces ATP from ADP in the presence of a proton gradient across the membrane. The catalytic sites are hosted primarily by the beta subunits. The protein is ATP synthase subunit beta of Chelativorans sp. (strain BNC1).